Here is a 467-residue protein sequence, read N- to C-terminus: Tel2-interacting protein 2 (467 aa).

The stretch at Tyr4–Asp45 forms a coiled coil.

This sequence belongs to the TTI2 family. Component of the TTT complex composed of tel2, tti1 and tti2. Interacts with tel2 and ttiI1. Component of the ASTRA complex composed of at least rvb1, rvb2, tra1, tel2, tti1 and tti2.

The protein resides in the nucleus. Functionally, component of the tel2-tti1-tti2 (TTT) complex that stabilizes protein levels of the phosphatidylinositol 3-kinase-related protein kinase (PIKK) family proteins. The TTT complex is involved in the cellular resistance to DNA damage stresses, like ionizing radiation (IR), ultraviolet (UV) and mitomycin C (MMC). Component of the ASTRA complex involved in chromatin remodeling. The protein is Tel2-interacting protein 2 of Schizosaccharomyces pombe (strain 972 / ATCC 24843) (Fission yeast).